The sequence spans 391 residues: Salivary protein TRIO (391 aa).

An N-terminal signal peptide occupies residues 1–24; the sequence is MCRGLSAVLILLVSLSAQLHVVVG. N-linked (GlcNAc...) asparagine glycosylation is present at Asn-323.

As to expression, female salivary gland (at protein level). Female saliva (at protein level). Not detected in female midgut, head and carcass (at protein level). Not detected in male tissues (at protein level).

The protein localises to the secreted. Required for efficient probing on a mammalian host. Alters the local inflammatory response in the host skin following a mosquito bite by suppressing TNF-alpha/TNF expression. In terms of biological role, (Microbial infection) Contributes to optimal transmission of Plasmodium berghei sporozoites to mice. Its function is as follows. (Microbial infection) Contributes to optimal transmission of Plasmodium falciparum sporozoites to mammalian host. This Anopheles gambiae (African malaria mosquito) protein is Salivary protein TRIO.